A 593-amino-acid chain; its full sequence is Mono(ADP-ribosyl)transferase SpvB (593 aa).

Positions 361-384 are disordered; the sequence is PVNNMMPPPPPPPPPMMGGNSSRP. Residues 366–376 are compositionally biased toward pro residues; it reads MPPPPPPPPPM. The 204-residue stretch at 375–578 folds into the TR mART core domain; that stretch reads PMMGGNSSRP…LRLSDDATAD (204 aa). Active-site residues include Arg-473, Ser-503, and Glu-540.

The protein belongs to the SpvB family.

It is found in the secreted. The enzyme catalyses L-arginyl-[protein] + NAD(+) = N(omega)-(ADP-D-ribosyl)-L-arginyl-[protein] + nicotinamide + H(+). Mono-ADP-ribosylates muscle and non-muscle actin. ADP-ribosylates Chinese hamster ovary and HeLa cell actin as well as rabbit muscle, porcine heart actin and non-muscle beta- and gamma-actin. ADP-ribosylation of actin prevents the polymerization of G actin to F actin, causing actin filament depolymerization, destruction of the cytoskeleton and cytotoxicity; this requires only the C-terminal 120 residues. Does not possess NAD(+)-glycohydrolase activity, unlike most mART enzymes. The protein is Mono(ADP-ribosyl)transferase SpvB (spvB) of Salmonella dublin.